The sequence spans 211 residues: Urease accessory protein UreG (211 aa).

12–19 (GPVGAGKT) is a GTP binding site.

This sequence belongs to the SIMIBI class G3E GTPase family. UreG subfamily. In terms of assembly, homodimer. UreD, UreF and UreG form a complex that acts as a GTP-hydrolysis-dependent molecular chaperone, activating the urease apoprotein by helping to assemble the nickel containing metallocenter of UreC. The UreE protein probably delivers the nickel.

The protein localises to the cytoplasm. Facilitates the functional incorporation of the urease nickel metallocenter. This process requires GTP hydrolysis, probably effectuated by UreG. The chain is Urease accessory protein UreG from Paracoccus denitrificans (strain Pd 1222).